Consider the following 442-residue polypeptide: MENWSKDITHSYLEQETTGINKSTQPDEQLTMNSEKSMHRKSTELVNEITCENTEWPGQRSTNFQIISSYPDDESVYCTTEKYNVMEHRHNDMHYECMTPCQVTSDSDKEKTIAFLLKELDILRTSNKKLQQKLAKEDKEQRKLKFKLELQEKETEAKIAEKTAALVEEVYFAQKERDEAVMSRLQLAIEERDEAIARAKHMEMSLKVLENINPEENDMTLQELLNRINNADTGIAIQKNGAIIVDRIYKTKECKMRITAEEMSALIEERDAALSKCKRLEQELHHVKEQNQTSANNMRHLTAENNQERALKAKLLSMQQARETAVQQYKKLEEEIQTLRVYYSLHKSLSQEENLKDQFNYTLSTYEEALKNRENIVSITQQQNEELATQLQQALTERANMELQLQHAREASQVANEKVQKLERLVDVLRKKVGTGTMRTVI.

Positions 1-39 (MENWSKDITHSYLEQETTGINKSTQPDEQLTMNSEKSMH) are disordered. A compositionally biased stretch (polar residues) spans 12–35 (YLEQETTGINKSTQPDEQLTMNSE). Coiled-coil stretches lie at residues 107–212 (SDKE…LENI) and 253–435 (ECKM…KVGT).

As to expression, expressed very weakly in heart, liver, skeletal muscle, kidney, pancreas and fetal kidney. Not detected in brain, placenta and lung.

This is Mirror-image polydactyly gene 1 protein (MIPOL1) from Homo sapiens (Human).